Consider the following 504-residue polypeptide: ATP synthase subunit alpha, chloroplastic (504 aa).

ATP is bound at residue 170 to 177 (GDRQTGKT).

It belongs to the ATPase alpha/beta chains family. In terms of assembly, F-type ATPases have 2 components, CF(1) - the catalytic core - and CF(0) - the membrane proton channel. CF(1) has five subunits: alpha(3), beta(3), gamma(1), delta(1), epsilon(1). CF(0) has four main subunits: a, b, b' and c.

The protein resides in the plastid. It is found in the chloroplast thylakoid membrane. The enzyme catalyses ATP + H2O + 4 H(+)(in) = ADP + phosphate + 5 H(+)(out). Its function is as follows. Produces ATP from ADP in the presence of a proton gradient across the membrane. The alpha chain is a regulatory subunit. The polypeptide is ATP synthase subunit alpha, chloroplastic (Pyropia yezoensis (Susabi-nori)).